The sequence spans 338 residues: Glycerol-3-phosphate dehydrogenase [NAD(P)+] (338 aa).

NADPH-binding residues include Ser13, Trp14, and Lys108. The sn-glycerol 3-phosphate site is built by Lys108, Gly139, and Ser141. Residue Ala143 participates in NADPH binding. Sn-glycerol 3-phosphate is bound by residues Lys194, Asp247, Ser257, Arg258, and Asn259. Lys194 (proton acceptor) is an active-site residue. Arg258 provides a ligand contact to NADPH. Positions 282 and 284 each coordinate NADPH.

The protein belongs to the NAD-dependent glycerol-3-phosphate dehydrogenase family.

The protein localises to the cytoplasm. The enzyme catalyses sn-glycerol 3-phosphate + NAD(+) = dihydroxyacetone phosphate + NADH + H(+). It carries out the reaction sn-glycerol 3-phosphate + NADP(+) = dihydroxyacetone phosphate + NADPH + H(+). It functions in the pathway membrane lipid metabolism; glycerophospholipid metabolism. Functionally, catalyzes the reduction of the glycolytic intermediate dihydroxyacetone phosphate (DHAP) to sn-glycerol 3-phosphate (G3P), the key precursor for phospholipid synthesis. This Listeria monocytogenes serotype 4b (strain CLIP80459) protein is Glycerol-3-phosphate dehydrogenase [NAD(P)+].